We begin with the raw amino-acid sequence, 516 residues long: 3-phosphoshikimate 1-carboxyvinyltransferase, chloroplastic (516 aa).

A chloroplast-targeting transit peptide spans 1 to 72 (MAQSSRICHG…KVTASVSTSE (72 aa)). 3-phosphoshikimate-binding residues include lysine 95, serine 96, and arginine 100. Phosphoenolpyruvate is bound at residue lysine 95. 2 residues coordinate phosphoenolpyruvate: glycine 173 and arginine 203. Serine 250, serine 251, glutamine 252, serine 278, aspartate 403, and lysine 430 together coordinate 3-phosphoshikimate. Glutamine 252 is a phosphoenolpyruvate binding site. Residue aspartate 403 is the Proton acceptor of the active site. Phosphoenolpyruvate is bound by residues arginine 434, arginine 476, and lysine 501.

The protein belongs to the EPSP synthase family.

It is found in the plastid. The protein resides in the chloroplast. It catalyses the reaction 3-phosphoshikimate + phosphoenolpyruvate = 5-O-(1-carboxyvinyl)-3-phosphoshikimate + phosphate. The protein operates within metabolic intermediate biosynthesis; chorismate biosynthesis; chorismate from D-erythrose 4-phosphate and phosphoenolpyruvate: step 6/7. In terms of biological role, catalyzes the transfer of the enolpyruvyl moiety of phosphoenolpyruvate (PEP) to the 5-hydroxyl of shikimate-3-phosphate (S3P) to produce enolpyruvyl shikimate-3-phosphate and inorganic phosphate. This chain is 3-phosphoshikimate 1-carboxyvinyltransferase, chloroplastic, found in Brassica napus (Rape).